Reading from the N-terminus, the 209-residue chain is MFLKYCGFQTQDDIKYAVEQHIDAIGFIHYPKSKRHQSIDEIEILSNLVPDTIYRVAVVVNPTDDIINQLLSRTNINAIQFHGDEDREMLRWCKNKYPDVKIIKALPADDTLSKRIQQYKEEADLFIIDTPSIHYGGTGQSFDWQVLEEIQDVPYLVAGGMTKEKIQQFEALHLNAAGYDIASGIETNGSKDPMKMKEISEYIKGEKQI.

It belongs to the TrpF family.

It catalyses the reaction N-(5-phospho-beta-D-ribosyl)anthranilate = 1-(2-carboxyphenylamino)-1-deoxy-D-ribulose 5-phosphate. It participates in amino-acid biosynthesis; L-tryptophan biosynthesis; L-tryptophan from chorismate: step 3/5. The protein is N-(5'-phosphoribosyl)anthranilate isomerase of Staphylococcus carnosus (strain TM300).